A 151-amino-acid polypeptide reads, in one-letter code: MQFSVAAVLALATAVAALPPASGTGAGQQVGHSKNDFPLPKELTTKQAADKCGDQAQLTCCNKTVKTGDFTQVEEGLLAGLLSNLLGAGQGSQGLGLLDECTNIPVIPIISIASPQEKCKQPISCCQNTKSSADGDLVGIGLPCIALGSLL.

The signal sequence occupies residues 1 to 17; the sequence is MQFSVAAVLALATAVAA. Intrachain disulfides connect Cys52-Cys125, Cys60-Cys119, Cys61-Cys101, and Cys126-Cys144.

Belongs to the fungal hydrophobin family. In terms of assembly, interacts with cutinase cutL1 in a pH-dependent manner. Self-assembles to form functional amyloid fibrils called rodlets. Self-assembly into fibrillar rodlets occurs spontaneously at hydrophobic:hydrophilic interfaces and the rodlets further associate laterally to form amphipathic monolayers. rolA rodlet formation is regulated by the strength of ionic interactions between rolA molecules. Three types of self-assembled structures of rolA are observed: spherical, rod-like, and mesh-like.

It is found in the secreted. It localises to the cell wall. In terms of biological role, aerial growth, conidiation, and dispersal of filamentous fungi in the environment rely upon a capability of their secreting small amphipathic proteins called hydrophobins (HPBs) with low sequence identity. Class I can self-assemble into an outermost layer of rodlet bundles on aerial cell surfaces, conferring cellular hydrophobicity that supports fungal growth, development and dispersal; whereas Class II form highly ordered films at water-air interfaces through intermolecular interactions but contribute nothing to the rodlet structure. RolA is a class I hydrophobin that undergoes a conformational change after its adsorption to hydrophobic surfaces such as the biodegradable polyester polybutylene succinate-coadipate (PBSA) and recruits the cutinase cutL1, resulting in condensation of cutL1 on the PBSA surface and consequent stimulation of PBSA hydrolysis. Increases also the activity of polyethylene terephthalate hydrolase (PETase) that hydrolyzes polyethylene terephthalate (PET), one of the most well-known polyesters that is widely used as packaging material, when the PET samples are preincubated with the hydrophobin. The wetting effect of rolA probably acts on PET surface to become hydrophilic, which leads PETase easier to contact and attack the surface. This chain is Class I hydrophobin A, found in Aspergillus oryzae (strain ATCC 42149 / RIB 40) (Yellow koji mold).